Here is a 203-residue protein sequence, read N- to C-terminus: Probable proteasome subunit beta type-1 (203 aa).

The propeptide at 1 to 10 (MMSNEKEMTG) is removed in mature form. The Nucleophile role is filled by Thr11.

The protein belongs to the peptidase T1B family. The 26S proteasome consists of a 20S proteasome core and two 19S regulatory subunits. The 20S proteasome core is composed of 28 subunits that are arranged in four stacked rings, resulting in a barrel-shaped structure. The two end rings are each formed by seven alpha subunits, and the two central rings are each formed by seven beta subunits. The catalytic chamber with the active sites is on the inside of the barrel.

It is found in the cytoplasm. It localises to the nucleus. It catalyses the reaction Cleavage of peptide bonds with very broad specificity.. The proteasome degrades poly-ubiquitinated proteins in the cytoplasm and in the nucleus. It is essential for the regulated turnover of proteins and for the removal of misfolded proteins. The proteasome is a multicatalytic proteinase complex that is characterized by its ability to cleave peptides with Arg, Phe, Tyr, Leu, and Glu adjacent to the leaving group at neutral or slightly basic pH. It has an ATP-dependent proteolytic activity. This is Probable proteasome subunit beta type-1 (PRE3) from Encephalitozoon cuniculi (strain GB-M1) (Microsporidian parasite).